Reading from the N-terminus, the 408-residue chain is Acetate kinase (408 aa).

A Mg(2+)-binding site is contributed by N10. K17 contacts ATP. R96 is a substrate binding site. D153 acts as the Proton donor/acceptor in catalysis. Residues H213–G217 and D288–R290 each bind ATP. E393 lines the Mg(2+) pocket.

The protein belongs to the acetokinase family. Homodimer. Requires Mg(2+) as cofactor. The cofactor is Mn(2+).

The protein resides in the cytoplasm. It carries out the reaction acetate + ATP = acetyl phosphate + ADP. Its pathway is metabolic intermediate biosynthesis; acetyl-CoA biosynthesis; acetyl-CoA from acetate: step 1/2. Functionally, catalyzes the formation of acetyl phosphate from acetate and ATP. Can also catalyze the reverse reaction. The chain is Acetate kinase from Borrelia duttonii (strain Ly).